Consider the following 240-residue polypeptide: Histidinol dehydrogenase homolog oryD (240 aa).

Zn(2+) is bound by residues Q64 and H67. The active-site Proton acceptor is E134. Positions 168 and 228 each coordinate Zn(2+).

The protein belongs to the histidinol dehydrogenase family. Requires Zn(2+) as cofactor.

Its pathway is secondary metabolite biosynthesis. In terms of biological role, histidinol dehydrogenase homolog; part of the gene cluster that mediates the biosynthesis of oryzines, natural products with an unusual maleidride backbone. The two subunits of the fungal fatty acid synthase oryfasA and oryfasB probably form octenoic acid. This fatty acid is most likely activated by the acyl-CoA ligase oryP to give octenyl-CoA before the citrate synthase-like protein oryE catalyzes condensation with oxaloacetate to form tricarboxylic acid. The next steps of the pathways are conjectural, but a favorite possible route has been proposed, beginning with decarboxylation and concomitant dehydration by the decarboxylase oryM, followed by tautomerization, which may lead to the production of a diene intermediate. Reduction of this diene intermediate could give the known metabolite piliformic acid. On the pathway to oryzine B and oryzine A, however, hydroxylation of the diene by the alpha-ketoglutarate-dependent dioxygenase oryG and lactonisation by the lactonohydrolases oryH or oryL could give oryzine B directly. Finally, enoyl reduction by the dehydrogenase oryD would then convert oryzine B into oryzine A. The protein is Histidinol dehydrogenase homolog oryD of Aspergillus oryzae (strain ATCC 42149 / RIB 40) (Yellow koji mold).